The following is a 205-amino-acid chain: Protein-L-isoaspartate O-methyltransferase (205 aa).

The active site involves serine 56.

The protein belongs to the methyltransferase superfamily. L-isoaspartyl/D-aspartyl protein methyltransferase family.

It localises to the cytoplasm. The enzyme catalyses [protein]-L-isoaspartate + S-adenosyl-L-methionine = [protein]-L-isoaspartate alpha-methyl ester + S-adenosyl-L-homocysteine. Catalyzes the methyl esterification of L-isoaspartyl residues in peptides and proteins that result from spontaneous decomposition of normal L-aspartyl and L-asparaginyl residues. It plays a role in the repair and/or degradation of damaged proteins. The protein is Protein-L-isoaspartate O-methyltransferase of Pyrobaculum arsenaticum (strain DSM 13514 / JCM 11321 / PZ6).